The sequence spans 890 residues: MAYRKRGVKRENLLQQNERLQEKEIENNTDVTMENKNNNRKQQLSDKVLSQKEEIITDVQDDIKIVDEVKKSSKEESKQLLEILKTKEDHQKEVQYEILQKTIPTFEPKESILKKLEDIRPEQAKKQMKLFRIFEPRQLPIYRANGEKELRNRWYWKLKKDTLPDGDYDVREYFLNLYDQILIEMPDYLLLKDMAVENKNSRDAGKVVDSETASICDAIFQDEETEGVIRRFIADMRQQIQADRNIVNYPSILHPIDHAFNEYFLNHQLVEPLNNEIIFNYIPERIRNDVNYILNMDMNLPSTARYIRPNLLQDRLNLHDNFESLWDTITTSNYILARSVVPDLREKELVSTEAQIQKMSQDLQLEALTIQSETQFLAGINSQAANDCFKTLIAAMLSQRTMSLDFVTTNYMSLISGMWLLTVIPNDMFLRESLVACELAIINTIVYPAFGMQRMHYRNGDPQTPFQIAEQQIQNFQVANWLHFINNNRFRQVVIDGVLNQTLNDNIRNGQVINQLMEALMQLSRQQFPTMPVDYKRSIQRGILLLSNRLGQLVDLTRLLSYNYETLMACITMNMQHVQTLTTEKLQLTSVTSLCMLIGNTTVIPSPQTLFHYYNVNVNFHSNYNERINDAVAIITAANRLNLYQKKMKSIVEDFLKRLQIFDVPRVPDDQMYRLRDRLRLLPVERRRLDIFNLILMNMDQIERASDKIAQGVIIAYRDMQLERDEMYGFVNIARNLDGYQQINLEELMRTGDYGQITNMLLNNQPVALVGALPFVTDSSVISLIAKLDATVFAQIVKLRKVDTLKPILYKINSDSNDFYLVANYDWIPTSTTKVYKQIPQPFDFRASMHMLTSNLTFTVYSDLLSFVSADTVEPINAIAFDNMRIMNEL.

Positions 1 to 45 (MAYRKRGVKRENLLQQNERLQEKEIENNTDVTMENKNNNRKQQLS) are disordered. Residues 1 to 88 (MAYRKRGVKR…QLLEILKTKE (88 aa)) form a 5-fold hub; involved in the encapsidation of VP1 and VP3 region. A compositionally biased stretch (polar residues) spans 28–42 (NTDVTMENKNNNRKQ). 2 hydrophobic regions span residues 404–424 (LDFV…LTVI) and 432–452 (ESLV…AFGM).

This sequence belongs to the rotavirus VP2 family. Homodecamer; each decamer is made up of two conformers of VP2, called VP2A and VP2B. Interacts with a VP1-VP3 complex. Interacts with the intermediate capsid protein VP6. Interacts with NSP5. Interacts (via N-terminus) with NSP2. Sumoylated with SUMO1 and SUMO2. Sumoylation of viral proteins seems to have a positive role on viral replication.

The protein resides in the virion. Functionally, inner capsid protein that self-assembles to form an icosahedral capsid with a T=2 symmetry, which consists of 120 copies of VP2, with channels at each of its five-fold vertices. This capsid constitutes the innermost concentric layer of the viral mature particle. It encapsidates the polymerase VP1, the capping enzyme VP3 and the genomic dsRNA, thereby defining the core. The innermost VP2 capsid and the intermediate VP6 capsid remain intact following cell entry to protect the dsRNA from degradation and to prevent unfavorable antiviral responses in the host cell during all the replication cycle of the virus. Nascent transcripts are transcribed within the structural confines of this double-layered particle (DLP) and are extruded through the channels formed by VP2 N-termini. VP2 is required for the replicase activity of VP1 polymerase. Probably recruits a copy of a VP1-VP3 complex, potentially along with a segment of plus-strand RNA, as a decamer of VP2 assembles. May activate the autoinhibited VP1/RNA complex to coordinate packaging and genome replication. This chain is Inner capsid protein VP2, found in Rotavirus A (isolate RVA/Human/United States/WI61/1983/G9P1A[8]) (RV-A).